A 276-amino-acid polypeptide reads, in one-letter code: NH(3)-dependent NAD(+) synthetase (276 aa).

43–50 (GISGGVDS) serves as a coordination point for ATP. A Mg(2+)-binding site is contributed by D49. Residue R146 coordinates deamido-NAD(+). T166 contacts ATP. Residue E171 participates in Mg(2+) binding. Deamido-NAD(+) contacts are provided by K179 and D186. K195 and T217 together coordinate ATP. 266–267 (HK) lines the deamido-NAD(+) pocket.

It belongs to the NAD synthetase family. As to quaternary structure, homodimer.

It catalyses the reaction deamido-NAD(+) + NH4(+) + ATP = AMP + diphosphate + NAD(+) + H(+). The protein operates within cofactor biosynthesis; NAD(+) biosynthesis; NAD(+) from deamido-NAD(+) (ammonia route): step 1/1. In terms of biological role, catalyzes the ATP-dependent amidation of deamido-NAD to form NAD. Uses ammonia as a nitrogen source. This is NH(3)-dependent NAD(+) synthetase from Psychromonas ingrahamii (strain DSM 17664 / CCUG 51855 / 37).